A 262-amino-acid polypeptide reads, in one-letter code: Apolipoprotein A-Ia (262 aa).

An N-terminal signal peptide occupies residues 1 to 18; sequence MKFVALALTLLLALGSQA. The interval 32-63 is 3 X approximate tandem repeats; sequence YKAAALVYLNQVKDQAEKALDNLDGTDYEQYK. 2 consecutive repeat copies span residues 64-85 and 87-107. Residues 64-262 form a 10 X approximate tandem repeats region; it reads LQLSESLTKL…YETIAKAIQA (199 aa). The 3; half-length repeat unit spans residues 108-118; sequence TDVEDLRSKLE. 5 consecutive repeat copies span residues 119-140, 141-162, 163-184, 185-206, and 207-228. One copy of the 9; half-length repeat lies at 229 to 239; sequence PHTQDLQTRME. The stretch at 240 to 262 is repeat 10; it reads PYMENVRTTFAQMYETIAKAIQA.

The protein belongs to the apolipoprotein A1/A4/E family. In terms of assembly, homodimer. Interacts with naxe and yjefn3.

It is found in the secreted. Participates in the reverse transport of cholesterol from tissues to the liver for excretion by promoting cholesterol efflux from tissues and by acting as a cofactor for the lecithin cholesterol acyltransferase (LCAT). This is Apolipoprotein A-Ia from Danio rerio (Zebrafish).